Reading from the N-terminus, the 312-residue chain is Very-long-chain 3-oxoacyl-CoA reductase (312 aa).

A helical membrane pass occupies residues alanine 4–leucine 24. Glycine 50–leucine 79 lines the NADP(+) pocket. Transmembrane regions (helical) follow at residues glycine 182–tyrosine 202 and glycine 271–phenylalanine 291. A substrate-binding site is contributed by serine 189. Tyrosine 202 (proton acceptor) is an active-site residue. The short motif at lysine 308–asparagine 312 is the Di-lysine motif element.

Belongs to the short-chain dehydrogenases/reductases (SDR) family. 17-beta-HSD 3 subfamily.

The protein localises to the endoplasmic reticulum membrane. The catalysed reaction is a very-long-chain (3R)-3-hydroxyacyl-CoA + NADP(+) = a very-long-chain 3-oxoacyl-CoA + NADPH + H(+). It catalyses the reaction 17beta-estradiol + NAD(+) = estrone + NADH + H(+). The enzyme catalyses 17beta-estradiol + NADP(+) = estrone + NADPH + H(+). It carries out the reaction 3-oxooctadecanoyl-CoA + NADPH + H(+) = (3R)-hydroxyoctadecanoyl-CoA + NADP(+). The catalysed reaction is (7Z,10Z,13Z,16Z)-3-oxodocosatetraenoyl-CoA + NADPH + H(+) = (3R)-hydroxy-(7Z,10Z,13Z,16Z)-docosatetraenoyl-CoA + NADP(+). It catalyses the reaction 3-oxo-(7Z,10Z,13Z,16Z,19Z)-docosapentaenoyl-CoA + NADPH + H(+) = (3R)-hydroxy-(7Z,10Z,13Z,16Z,19Z)-docosapentaenoyl-CoA + NADP(+). The enzyme catalyses (8Z,11Z,14Z)-3-oxoeicosatrienoyl-CoA + NADPH + H(+) = (3R)-hydroxy-(8Z,11Z,14Z)-eicosatrienoyl-CoA + NADP(+). It functions in the pathway lipid metabolism; fatty acid biosynthesis. It participates in steroid biosynthesis; estrogen biosynthesis. In terms of biological role, catalyzes the second of the four reactions of the long-chain fatty acids elongation cycle. This endoplasmic reticulum-bound enzymatic process, allows the addition of two carbons to the chain of long- and very long-chain fatty acids/VLCFAs per cycle. This enzyme has a 3-ketoacyl-CoA reductase activity, reducing 3-ketoacyl-CoA to 3-hydroxyacyl-CoA, within each cycle of fatty acid elongation. Thereby, it may participate in the production of VLCFAs of different chain lengths that are involved in multiple biological processes as precursors of membrane lipids and lipid mediators. May also catalyze the transformation of estrone (E1) into estradiol (E2) and play a role in estrogen formation. This chain is Very-long-chain 3-oxoacyl-CoA reductase, found in Rattus norvegicus (Rat).